We begin with the raw amino-acid sequence, 495 residues long: Ectonucleoside triphosphate diphosphohydrolase 2 (495 aa).

The Cytoplasmic portion of the chain corresponds to 2–4 (ARR). Residues 5–25 (AAAVLLLLALGCLLGILLLCL) form a helical membrane-spanning segment. Over 26 to 465 (GSGDARGPPS…SHRSMLYNYW (440 aa)) the chain is Extracellular. The N-linked (GlcNAc...) asparagine glycan is linked to N62. A disulfide bond links C73 and C97. E162 functions as the Proton acceptor in the catalytic mechanism. An ATP-binding site is contributed by 201–205 (GASTQ). Cystine bridges form between C239–C286, C267–C311, C324–C329, and C378–C400. N-linked (GlcNAc...) asparagine glycosylation occurs at N297. Residues N418 and N444 are each glycosylated (N-linked (GlcNAc...) asparagine). Residues 466–486 (VILILLFVITTLTALLTAVYL) form a helical membrane-spanning segment. Over 487–495 (LRRSKSSTI) the chain is Cytoplasmic.

This sequence belongs to the GDA1/CD39 NTPase family. It depends on Ca(2+) as a cofactor. The cofactor is Mg(2+).

Its subcellular location is the membrane. In the nervous system, could hydrolyze ATP and other nucleotides to regulate purinergic neurotransmission. Hydrolyzes ADP only to a marginal extent. In Gallus gallus (Chicken), this protein is Ectonucleoside triphosphate diphosphohydrolase 2 (ENTPD2).